The following is a 538-amino-acid chain: Tetracenomycin C resistance and export protein (538 aa).

Transmembrane regions (helical) follow at residues 28 to 48 (LLAV…VAIA), 65 to 85 (WITN…GKLG), 100 to 120 (GFAV…IVVF), 126 to 146 (LFGA…FPPG), 154 to 174 (IWSG…GLLV), 181 to 201 (AVFF…LVIL), 213 to 233 (FDVS…WGLI), 239 to 259 (GWGD…FAGF), 286 to 306 (VLMV…TFYL), 319 to 339 (VHLL…GIVI), 342 to 362 (FGPG…LWGM), 371 to 391 (MGIT…VMVG), 413 to 433 (QSAM…LMAS), and 494 to 514 (MGLA…VALF).

This sequence belongs to the major facilitator superfamily. EmrB family.

The protein resides in the cell membrane. It participates in antibiotic biosynthesis; tetracenomycin C biosynthesis. Resistance to tetracenomycin C by an active tetracenomycin C efflux system which is probably energized by transmembrane electrochemical gradients. The polypeptide is Tetracenomycin C resistance and export protein (tcmA) (Streptomyces glaucescens).